Reading from the N-terminus, the 324-residue chain is MLFTEEQLKLYSKPLSESEKEKCENAIRIIQESLESLGYETKKGIHRNNEDTLSYQIKMTNPSKDYELSIFVKGSYATNTNVRQNSDVDIAVVKESEFFDKYREGKTRENYKFVSSNKPPYHFKDEVEEALIERFGRSEVRRGNKAIRINGNTYRKETDCVPCFRYRDYSNDYMDDPNNFIGGITIYSDKGERIINYPEQHINNSVIKNNNTNYKYKKMVRIIKEIRYQLIDSKNENAKQTSSFGVEGLFWNIPDYKYSNDEMLGDTFNALIAFLIDNIDKLREFKEPNDILNLCDSQEKNNVYKNFILDVKNYFEYSGEKKYE.

The Mg(2+) site is built by aspartate 87 and aspartate 89. Residues aspartate 89, asparagine 144 to lysine 145, and aspartate 159 contribute to the ATP site. Position 159 (aspartate 159) interacts with Mg(2+). GTP contacts are provided by lysine 224 and serine 243.

Belongs to the CD-NTase family. E03 subfamily. It depends on Mg(2+) as a cofactor.

The catalysed reaction is GTP + ATP = 3',2'-cGAMP + 2 diphosphate. Activated by a virus-derived, approximately 400 nucleotide RNA (called CBASS-activating bacteriophage RNA, cabRNA) that begins in the viral terminase subunit terS and extends into terL. RNA secondary and/or tertiary structure, as well as viral infection itself, are important for CdnE activation. A much longer RNA (escaper RNA) with a different secondary structure, derived from a terS-mutated virus still binds to this protein, but does not activate its nucleotide cyclase activity. Shorter viral-derived RNAs (34 and 49 nt) with extensive predicted secondary structure also activate the enzyme, although not as well as full-length cabRNA. In terms of biological role, cyclic nucleotide synthase (second messenger synthase) of a CBASS antivirus system. CBASS (cyclic oligonucleotide-based antiphage signaling system) provides immunity against bacteriophage. The CD-NTase protein synthesizes cyclic nucleotides in response to infection; these serve as specific second messenger signals. The signals activate a diverse range of effectors, leading to bacterial cell death and thus abortive phage infection. The effector for this system is downstream Cap15. A type I-B CBASS system. Its function is as follows. Cyclic dinucleotide synthase that catalyzes the synthesis of 3',2'-cyclic GMP-AMP (cGAMP) from GTP and ATP upon activation by viral-derived cabRNA. Binds cabRNA via positive charges in its N-terminus. Functionally, protects S.aureus against phage infection. When the CBASS operon (cdnE-cap15) is introduced in S.aureus strain RN4220 there is strong protection against lytic DNA phages 80alpha-vir and phi-NM1-gamma-6 but little to no protection against phages phi-NM4-gamma-4 or phi-12-gamma-3. In Staphylococcus schleiferi, this protein is Cyclic GMP-AMP synthase CdnE03.